The chain runs to 220 residues: UPF0758 protein ASA_4229 (220 aa).

Residues 95–220 form the MPN domain; it reads EQLQRGDALT…TVSFAERGWL (126 aa). Zn(2+)-binding residues include histidine 169, histidine 171, and aspartate 182. A JAMM motif motif is present at residues 169–182; it reads HNHPSGVAEPSRAD.

It belongs to the UPF0758 family.

The protein is UPF0758 protein ASA_4229 of Aeromonas salmonicida (strain A449).